Reading from the N-terminus, the 124-residue chain is Putative calmodulin-3 (124 aa).

EF-hand domains lie at 1 to 18 (GCITTKELGTVMRSLGQN), 19 to 54 (PTEAELQDMINEVDADGNGTIDFPEFLNLMARKIKD), 56 to 91 (DFEEELKEAFRVFDKDRNGFISAAELPHVMTNLGEK), and 92 to 124 (LTDEEVDEIIREADVDCDGQINYDEFVKVMMAK). Ca(2+)-binding residues include Cys2, Glu7, Asp32, Asp34, Asn36, Thr38, Glu43, Asp69, Asp71, Asn73, and Glu80. Lys91 carries the post-translational modification N6,N6,N6-trimethyllysine. 5 residues coordinate Ca(2+): Asp105, Asp107, Asp109, Gln111, and Glu116.

This sequence belongs to the calmodulin family. Not detected in the organs tested.

Calmodulin mediates the control of a large number of enzymes, ion channels and other proteins by Ca(2+). Among the enzymes to be stimulated by the calmodulin-Ca(2+) complex are a number of protein kinases and phosphatases. The chain is Putative calmodulin-3 (PCM3) from Solanum tuberosum (Potato).